Reading from the N-terminus, the 630-residue chain is Cyclin-T1-2 (630 aa).

Positions 288 to 297 (QSSLSVSSSS) are enriched in low complexity. Disordered regions lie at residues 288-313 (QSSLSVSSSSPEIGDPNDHLQVDSSQ) and 410-439 (RSGDKTKLCSEGGSSLTDVDSKSTQSVEPP). Residues 421–439 (GGSSLTDVDSKSTQSVEPP) are compositionally biased toward polar residues.

It belongs to the cyclin family. Cyclin T subfamily.

In Oryza sativa subsp. japonica (Rice), this protein is Cyclin-T1-2 (CYCT1_2).